Here is a 179-residue protein sequence, read N- to C-terminus: Large ribosomal subunit protein uL5 (179 aa).

It belongs to the universal ribosomal protein uL5 family. As to quaternary structure, part of the 50S ribosomal subunit; part of the 5S rRNA/L5/L18/L25 subcomplex. Contacts the 5S rRNA and the P site tRNA. Forms a bridge to the 30S subunit in the 70S ribosome.

Its function is as follows. This is one of the proteins that bind and probably mediate the attachment of the 5S RNA into the large ribosomal subunit, where it forms part of the central protuberance. In the 70S ribosome it contacts protein S13 of the 30S subunit (bridge B1b), connecting the 2 subunits; this bridge is implicated in subunit movement. Contacts the P site tRNA; the 5S rRNA and some of its associated proteins might help stabilize positioning of ribosome-bound tRNAs. This chain is Large ribosomal subunit protein uL5, found in Synechococcus sp. (strain RCC307).